The sequence spans 1241 residues: ATP-dependent helicase/nuclease subunit A (1241 aa).

In terms of domain architecture, UvrD-like helicase ATP-binding spans 12 to 485 (SQWTDDQWKA…IDLAKNFRSR (474 aa)). 33–40 (AAAGSGKT) serves as a coordination point for ATP. In terms of domain architecture, UvrD-like helicase C-terminal spans 505-805 (GEIDYDADAE…RIMTIHKSKG (301 aa)).

The protein belongs to the helicase family. AddA subfamily. In terms of assembly, heterodimer of AddA and AddB/RexB. Mg(2+) is required as a cofactor.

The enzyme catalyses Couples ATP hydrolysis with the unwinding of duplex DNA by translocating in the 3'-5' direction.. It catalyses the reaction ATP + H2O = ADP + phosphate + H(+). Its function is as follows. The heterodimer acts as both an ATP-dependent DNA helicase and an ATP-dependent, dual-direction single-stranded exonuclease. Recognizes the chi site generating a DNA molecule suitable for the initiation of homologous recombination. The AddA nuclease domain is required for chi fragment generation; this subunit has the helicase and 3' -&gt; 5' nuclease activities. The chain is ATP-dependent helicase/nuclease subunit A from Bacillus cereus (strain ATCC 10987 / NRS 248).